A 79-amino-acid chain; its full sequence is Sec-independent protein translocase protein TatA (79 aa).

The chain crosses the membrane as a helical span at residues 1–21 (MGSLSIWHWIVVIAVVLLLFG). A compositionally biased stretch (basic and acidic residues) spans 43 to 60 (LQDDEKTAEKPDPVKSID). The interval 43-79 (LQDDEKTAEKPDPVKSIDHNAPTAAAPTRTDVGSKAV) is disordered.

This sequence belongs to the TatA/E family. As to quaternary structure, the Tat system comprises two distinct complexes: a TatABC complex, containing multiple copies of TatA, TatB and TatC subunits, and a separate TatA complex, containing only TatA subunits. Substrates initially bind to the TatABC complex, which probably triggers association of the separate TatA complex to form the active translocon.

The protein resides in the cell inner membrane. Its function is as follows. Part of the twin-arginine translocation (Tat) system that transports large folded proteins containing a characteristic twin-arginine motif in their signal peptide across membranes. TatA could form the protein-conducting channel of the Tat system. The chain is Sec-independent protein translocase protein TatA from Rhodopseudomonas palustris (strain BisB5).